We begin with the raw amino-acid sequence, 397 residues long: SET domain-containing protein 4 (397 aa).

One can recognise an SET domain in the interval 29 to 245 (AKLEPCRFKE…KCSEVFINYG (217 aa)). Tyrosine 244 lines the S-adenosyl-L-methionine pocket.

The protein belongs to the class V-like SAM-binding methyltransferase superfamily. SETD4 family.

The protein localises to the nucleus. It catalyses the reaction L-lysyl(79)-[histone H3] + 3 S-adenosyl-L-methionine = N(6),N(6),N(6)-trimethyl-L-lysyl(79)-[histone H3] + 3 S-adenosyl-L-homocysteine + 3 H(+). The catalysed reaction is L-lysyl(20)-[histone H4] + S-adenosyl-L-methionine = N(6)-methyl-L-lysyl(20)-[histone H4] + S-adenosyl-L-homocysteine + H(+). The enzyme catalyses N(6)-methyl-L-lysyl(20)-[histone H4] + S-adenosyl-L-methionine = N(6),N(6)-dimethyl-L-lysyl(20)-[histone H4] + S-adenosyl-L-homocysteine + H(+). It carries out the reaction N(6),N(6)-dimethyl-L-lysyl(20)-[histone H4] + S-adenosyl-L-methionine = N(6),N(6),N(6)-trimethyl-L-lysyl(20)-[histone H4] + S-adenosyl-L-homocysteine + H(+). Protein-lysine N-methyltransferase involved in the regulation of cell quiescence by catalyzing the trimethylation of 'Lys-20' of histone H4 and 'Lys-79' of histone H3 (H4K20me3 and H3K79me3, respectively) during diapause formation, a state of obligate dormancy. The sequence is that of SET domain-containing protein 4 from Artemia parthenogenetica (Brine shrimp).